Here is a 136-residue protein sequence, read N- to C-terminus: MEFEVKSPILGFESVRGMRLEKIDDLFMKLKNAEADSPVFTLVNPFLLREYDFEIPLAMKVLLDLKENTNLLVLNIMIIHTPLESSTVNFLAPVIFNFDNHTMGQLVLESHRYPAYGLAETISSFFNSDSTPTQEA.

Belongs to the FliW family. As to quaternary structure, interacts with translational regulator CsrA and flagellin(s).

It localises to the cytoplasm. Acts as an anti-CsrA protein, binds CsrA and prevents it from repressing translation of its target genes, one of which is flagellin. Binds to flagellin and participates in the assembly of the flagellum. The sequence is that of Flagellar assembly factor FliW 2 from Wolinella succinogenes (strain ATCC 29543 / DSM 1740 / CCUG 13145 / JCM 31913 / LMG 7466 / NCTC 11488 / FDC 602W) (Vibrio succinogenes).